The sequence spans 287 residues: Ethylene-responsive transcription factor ERF116 (287 aa).

Positions 80–140 (YPVGVRPRPS…ASSGSAVSSS (61 aa)) form a DNA-binding region, AP2/ERF.

It belongs to the AP2/ERF transcription factor family. ERF subfamily.

It is found in the nucleus. In terms of biological role, probably acts as a transcriptional activator. Binds to the GCC-box pathogenesis-related promoter element. May be involved in the regulation of gene expression by stress factors and by components of stress signal transduction pathways. This Arabidopsis thaliana (Mouse-ear cress) protein is Ethylene-responsive transcription factor ERF116 (ERF116).